The following is a 1070-amino-acid chain: DNA-directed RNA polymerase subunit beta (1070 aa).

This sequence belongs to the RNA polymerase beta chain family. In terms of assembly, in plastids the minimal PEP RNA polymerase catalytic core is composed of four subunits: alpha, beta, beta', and beta''. When a (nuclear-encoded) sigma factor is associated with the core the holoenzyme is formed, which can initiate transcription.

It is found in the plastid. The protein resides in the chloroplast. It carries out the reaction RNA(n) + a ribonucleoside 5'-triphosphate = RNA(n+1) + diphosphate. DNA-dependent RNA polymerase catalyzes the transcription of DNA into RNA using the four ribonucleoside triphosphates as substrates. This chain is DNA-directed RNA polymerase subunit beta, found in Vitis vinifera (Grape).